Here is a 474-residue protein sequence, read N- to C-terminus: Glutamate--tRNA ligase 1 (474 aa).

The 'HIGH' region signature appears at 10–20 (PSPTGFLHIGG). Residues 239 to 243 (KLSKR) carry the 'KMSKS' region motif. Lysine 242 serves as a coordination point for ATP.

This sequence belongs to the class-I aminoacyl-tRNA synthetase family. Glutamate--tRNA ligase type 1 subfamily. Monomer.

The protein localises to the cytoplasm. The catalysed reaction is tRNA(Glu) + L-glutamate + ATP = L-glutamyl-tRNA(Glu) + AMP + diphosphate. In terms of biological role, catalyzes the attachment of glutamate to tRNA(Glu) in a two-step reaction: glutamate is first activated by ATP to form Glu-AMP and then transferred to the acceptor end of tRNA(Glu). This is Glutamate--tRNA ligase 1 from Methylobacterium sp. (strain 4-46).